We begin with the raw amino-acid sequence, 358 residues long: Trace amine-associated receptor 7d (358 aa).

The Extracellular segment spans residues 1–47 (MRVDDDRFPWDQDSILSRDLLSASSLQLCYENLNRSCVRSPYSPGPR). A glycan (N-linked (GlcNAc...) asparagine) is linked at asparagine 34. Intrachain disulfides connect cysteine 37/cysteine 201 and cysteine 120/cysteine 205. The helical transmembrane segment at 48 to 68 (LILYAVFGFGAVLAVCGNLMV) threads the bilayer. Residues 69–83 (MTSILHFRQLHSPAN) are Cytoplasmic-facing. The chain crosses the membrane as a helical span at residues 84-104 (FLVASLACADFLVGLTVMPFS). The Extracellular segment spans residues 105-122 (MVRSVEGCWYFGDTYCKL). Residues 123-143 (HTCFDVSFCYCSLFHLCFISV) form a helical membrane-spanning segment. Over 144–166 (DRYIAVSDPLIYPTRFTASVSGK) the chain is Cytoplasmic. Residues 167-187 (CITFSWLLSIIYGFPLIYTGA) form a helical membrane-spanning segment. Residues 188 to 212 (SEAGLEDLVSALTCVGGCQIPMNQK) are Extracellular-facing. The chain crosses the membrane as a helical span at residues 213–233 (FVLINFLLFLVPTLVMMTVYS). Residues 234–274 (KIFLIARQQAQNIEKMRKQTARASESYKDRVCKRERKAAKT) lie on the Cytoplasmic side of the membrane. The chain crosses the membrane as a helical span at residues 275–295 (LGIAVAAFLLSWLPYFIDSII). Topologically, residues 296-309 (DAFLGFITPTYVYE) are extracellular. Residues 310–333 (ILIWIVYYNSSMNPLIYAFFYPWF) form a helical membrane-spanning segment. The Cytoplasmic portion of the chain corresponds to 334 to 358 (RKATKLIVTGKILRENSSTINLFPE).

This sequence belongs to the G-protein coupled receptor 1 family.

The protein localises to the cell membrane. Olfactory receptor specific for N,N-dimethylalkylamines trace amines, such as N,N-dimethylcyclohexylamine. Trace amine compounds are enriched in animal body fluids and act on trace amine-associated receptors (TAARs) to elicit both intraspecific and interspecific innate behaviors. Ligand-binding causes a conformation change that triggers signaling via G(s)-class of G alpha proteins (GNAL or GNAS). This is Trace amine-associated receptor 7d from Rattus norvegicus (Rat).